The chain runs to 129 residues: Small ribosomal subunit protein uS11 (129 aa).

Belongs to the universal ribosomal protein uS11 family. As to quaternary structure, part of the 30S ribosomal subunit. Interacts with proteins S7 and S18. Binds to IF-3.

Its function is as follows. Located on the platform of the 30S subunit, it bridges several disparate RNA helices of the 16S rRNA. Forms part of the Shine-Dalgarno cleft in the 70S ribosome. This is Small ribosomal subunit protein uS11 from Mycoplasma mycoides subsp. mycoides SC (strain CCUG 32753 / NCTC 10114 / PG1).